The chain runs to 668 residues: DNA ligase (668 aa).

NAD(+) is bound by residues 32–36 (DAEYD), 81–82 (SL), and E111. The N6-AMP-lysine intermediate role is filled by K113. Residues R134, E171, K290, and K314 each coordinate NAD(+). Zn(2+) is bound by residues C408, C411, C426, and C432. Residues 591-668 (EEDLSLKGQT…DEEALIAILS (78 aa)) enclose the BRCT domain.

It belongs to the NAD-dependent DNA ligase family. LigA subfamily. The cofactor is Mg(2+). It depends on Mn(2+) as a cofactor.

It catalyses the reaction NAD(+) + (deoxyribonucleotide)n-3'-hydroxyl + 5'-phospho-(deoxyribonucleotide)m = (deoxyribonucleotide)n+m + AMP + beta-nicotinamide D-nucleotide.. Its function is as follows. DNA ligase that catalyzes the formation of phosphodiester linkages between 5'-phosphoryl and 3'-hydroxyl groups in double-stranded DNA using NAD as a coenzyme and as the energy source for the reaction. It is essential for DNA replication and repair of damaged DNA. The sequence is that of DNA ligase from Shewanella pealeana (strain ATCC 700345 / ANG-SQ1).